Consider the following 182-residue polypeptide: Endoribonuclease YbeY (182 aa).

Zn(2+)-binding residues include His-115, His-119, and His-125.

Belongs to the endoribonuclease YbeY family. It depends on Zn(2+) as a cofactor.

It localises to the cytoplasm. Functionally, single strand-specific metallo-endoribonuclease involved in late-stage 70S ribosome quality control and in maturation of the 3' terminus of the 16S rRNA. The chain is Endoribonuclease YbeY from Bifidobacterium longum (strain NCC 2705).